The sequence spans 661 residues: Pentatricopeptide repeat-containing protein At3g04750, mitochondrial (661 aa).

Residues 1-18 (MCFVLLLRRGFRLFGTEC) constitute a mitochondrion transit peptide. 13 PPR repeats span residues 99–131 (NVFV…RVSP), 132–163 (DRQT…GCLS), 165–195 (GNYL…MPHP), 196–230 (DVSS…GIEP), 231–265 (DEYT…GPVY), 268–298 (NLIL…MKKK), 299–333 (DMRS…DLVS), 334–366 (WNSL…KVKP), 367–401 (DRVT…QLKG), 402–432 (DAFL…ATEK), 433–467 (DVAL…GVTP), 468–498 (NNVT…MKDK), and 504–539 (ETEH…PSQS). Positions 540–615 (MWGSILSACR…TAGYSSVVGV (76 aa)) are type E motif. Positions 616–647 (EGLHRFVAAEKQNHPRWTEIKRILQHLYNEMK) are type E(+) motif.

It belongs to the PPR family. PCMP-E subfamily.

It is found in the mitochondrion. This is Pentatricopeptide repeat-containing protein At3g04750, mitochondrial (PCMP-E81) from Arabidopsis thaliana (Mouse-ear cress).